Consider the following 212-residue polypeptide: 2,3-bisphosphoglycerate-dependent phosphoglycerate mutase (212 aa).

Substrate contacts are provided by residues 9-16, 22-23, arginine 61, 88-91, lysine 99, 115-116, and 159-160; these read RHGQSEWN, TG, ERDY, RR, and GN. Histidine 10 serves as the catalytic Tele-phosphohistidine intermediate. The Proton donor/acceptor role is filled by glutamate 88.

Belongs to the phosphoglycerate mutase family. BPG-dependent PGAM subfamily. As to quaternary structure, homodimer.

The catalysed reaction is (2R)-2-phosphoglycerate = (2R)-3-phosphoglycerate. Its pathway is carbohydrate degradation; glycolysis; pyruvate from D-glyceraldehyde 3-phosphate: step 3/5. Its function is as follows. Catalyzes the interconversion of 2-phosphoglycerate and 3-phosphoglycerate. This chain is 2,3-bisphosphoglycerate-dependent phosphoglycerate mutase, found in Methylorubrum extorquens (strain CM4 / NCIMB 13688) (Methylobacterium extorquens).